Consider the following 362-residue polypeptide: Chorismate synthase (362 aa).

Arginine 48 contributes to the NADP(+) binding site. Residues 131–133 (RAS), 243–244 (NA), glycine 288, 303–307 (KPTSS), and arginine 329 contribute to the FMN site.

Belongs to the chorismate synthase family. In terms of assembly, homotetramer. FMNH2 is required as a cofactor.

The catalysed reaction is 5-O-(1-carboxyvinyl)-3-phosphoshikimate = chorismate + phosphate. Its pathway is metabolic intermediate biosynthesis; chorismate biosynthesis; chorismate from D-erythrose 4-phosphate and phosphoenolpyruvate: step 7/7. Its function is as follows. Catalyzes the anti-1,4-elimination of the C-3 phosphate and the C-6 proR hydrogen from 5-enolpyruvylshikimate-3-phosphate (EPSP) to yield chorismate, which is the branch point compound that serves as the starting substrate for the three terminal pathways of aromatic amino acid biosynthesis. This reaction introduces a second double bond into the aromatic ring system. The protein is Chorismate synthase of Bartonella tribocorum (strain CIP 105476 / IBS 506).